The chain runs to 64 residues: MSKIKFKTKSALKKRIKVTGTGKVKHGHAYRSHLAQSKTTKQKRQSRKSTLMNNSDFKRLKKLI.

Positions 22 to 31 are enriched in basic residues; the sequence is GKVKHGHAYR. Residues 22–64 form a disordered region; it reads GKVKHGHAYRSHLAQSKTTKQKRQSRKSTLMNNSDFKRLKKLI.

It belongs to the bacterial ribosomal protein bL35 family.

In Mesomycoplasma hyopneumoniae (strain 232) (Mycoplasma hyopneumoniae), this protein is Large ribosomal subunit protein bL35.